The sequence spans 814 residues: Coiled-coil and C2 domain-containing protein 1-like (814 aa).

Basic and acidic residues predominate over residues 1 to 11; it reads MFAKRKPEPAK. Disordered stretches follow at residues 1 to 136 and 157 to 263; these read MFAK…TFLP and EANA…RSRQ. Residues 25 to 47 are compositionally biased toward acidic residues; the sequence is IPDDFDPTSGYGDDDGGDSDLEA. Residues 73-85 show a composition bias toward basic and acidic residues; it reads DLDKMIADSLRDV. Acidic residues-rich tracts occupy residues 86–100 and 110–130; these read SDDDDDENLENDSDL and LEEEPEAEEAAAEPAASEEEP. Positions 143 to 201 are DM14 1; it reads LGIIKQRLEIYKQAEANAKASGDSGKARRFGRGLKTLQDLHKQAAAGKTINVDDIPPEV. Low complexity predominate over residues 205 to 230; that stretch reads PAGDPSPAADESPAPSTPVSQPTRVA. The segment covering 231–254 has biased composition (pro residues); that stretch reads PAPPTPTSPPAATPPPAPATPPNP. 2 DM14 regions span residues 256–314 and 358–416; these read VAQM…PPPP and LEAL…PVPP. The stretch at 351–378 forms a coiled coil; it reads AAAAESMLEALQRRLEKYKSVEAAAKAE. Residues 414-425 are compositionally biased toward pro residues; it reads VPPGFGPLPSTE. Residues 414–486 form a disordered region; that stretch reads VPPGFGPLPS…LTTRVTGNHQ (73 aa). Residues 426 to 462 show a composition bias toward low complexity; sequence PAPAATPSLPTSPTSPPATASTSAGGTPSGSSATTPT. Positions 475 to 486 are enriched in polar residues; that stretch reads TELTTRVTGNHQ. A DM14 4 region spans residues 495–553; it reads MKLLLERQKEFKVAAIEAKKAGEIDQAKEYLKIYKGFDSLLNAASSGLPVDLSTLPVPP. The C2 domain maps to 633 to 772; sequence RKGQPLPKFH…ETKCDIHDTY (140 aa).

It belongs to the CC2D1 family. Interacts (via DM14 domains 1 and 3) with shrb; the interaction is direct and blocks access to the surface involved in shrb polymerization. This interaction may be required for the ESCRT-III complex role in multivesicular body formation.

Its subcellular location is the cytoplasm. It localises to the cytosol. The protein resides in the apicolateral cell membrane. The protein localises to the cell cortex. It is found in the endosome. Functionally, phosphatidyl inositol monophosphate binding protein involved in endosomal protein sorting through regulation of the endosomal sorting required for transport (ESCRT) pathway. Required for full activity of the ESCRT-III complex core component shrb/shrub, probably by preventing its inappropriate polymerisation. Required, but not essential, for the efficient generation of intraluminal vesicles (ILVs) in multivesicular bodies (MVBs). Involved in a late stage of the endosomal pathway targeting transmembrane proteins of the plasma membrane for lysosomal degradation. Plays a critical role in regulation of multiple signal transduction pathways, including the Notch and BMP/decapentaplegic (dpp) signaling pathways, through targeting of membrane bound receptors to multivesicular bodies, isolating them from the cytoplasm and targeting them for lysosomal degradation. Involved in targeting N/Notch for endosomal degradation, negatively regulating the Notch signaling pathway. Regulates Notch signaling in imaginal disk cells and follicle cells during oogenesis and multiple developmental processes, including development of wings, veins, legs, eyes and bristles. Restricts the activity of Notch to the dorsoventral (D/V) boundary of the wing imaginal disk. In external sensory organ development regulates Notch signaling during asymmetric cell division and differentiation of sensory organ precursor cells. May be involved in regulation of apoptosis and cell growth independent of Notch signaling. Involved in targeting tkv for endosomal degradation, negatively regulating the BMP/decapentaplegic (dpp) signaling pathway. Regulates the BMP/dpp signaling pathway in follicle cells during oogenesis, but not in imaginal disk cells during wing development. May be involved in differentiation or morphogenesis of peripodial epithelial cells in the developing imaginal disk. Involved in abscission of germline cells during oogenesis. The sequence is that of Coiled-coil and C2 domain-containing protein 1-like from Drosophila pseudoobscura pseudoobscura (Fruit fly).